We begin with the raw amino-acid sequence, 234 residues long: MFDTKALQAEQRQRASEISLHDGIDNQFVRFIAGADVGFEQHGEITRAAIAILRYPSLALVEYQVARVATSLPYIPGLLSFREYPALLAAWAQLQQRPDLILVDGQGIAHPRRLGVASHFGLLVDVPTIGVAKSRLCGDFLPLHQDVGAVQPLFDNDEQLGWVWRSKIRCNPLFISPGHRVSVGSALAWVQRCMAGYRLPEPTRWADAIASNRPQFQRWLRKNPDFLGKRRDMI.

Asp36 and Asp104 together coordinate Mg(2+).

This sequence belongs to the endonuclease V family. Mg(2+) serves as cofactor.

It is found in the cytoplasm. The catalysed reaction is Endonucleolytic cleavage at apurinic or apyrimidinic sites to products with a 5'-phosphate.. Its function is as follows. DNA repair enzyme involved in the repair of deaminated bases. Selectively cleaves double-stranded DNA at the second phosphodiester bond 3' to a deoxyinosine leaving behind the intact lesion on the nicked DNA. The protein is Endonuclease V of Yersinia pseudotuberculosis serotype O:1b (strain IP 31758).